Consider the following 829-residue polypeptide: Potassium voltage-gated channel unc-103 (829 aa).

The interval 1–76 (MKTAVFGRDS…PRASHSSRRT (76 aa)) is disordered. Over 1–123 (MKTAVFGRDS…YSPFKAVWDW (123 aa)) the chain is Cytoplasmic. The segment covering 46-66 (GVSGTGGGGSGGLQGAPGAGG) has biased composition (gly residues). The chain crosses the membrane as a helical span at residues 124–144 (IILLLVIYTAVFTPYVAAFLL). Residues 145-158 (RELQDTAKKSRFTE) lie on the Extracellular side of the membrane. The helical transmembrane segment at 159 to 179 (PLEIVDLIVDIMFIVDIIINF) threads the bilayer. Topologically, residues 180-203 (RTTYVNENDEACQVVSDPGKIATH) are cytoplasmic. Residues 204–224 (YFKGWFIIDMVAAVPFDLLLV) traverse the membrane as a helical segment. The Extracellular segment spans residues 225–234 (STNSDETTTL). A helical; Voltage-sensor transmembrane segment spans residues 235 to 255 (IGLLKTARLLRLVRVARKLDR). Residues 256 to 261 (YSEYGA) are Cytoplasmic-facing. Residues 262–282 (AVLLLLMATFALIAHWLACIW) form a helical membrane-spanning segment. The Extracellular portion of the chain corresponds to 283-327 (YAIGSAELSHKEYTWLHQLSKQLAQPYTSTNGTIPTGGPTLKSRY). Asn313 is a glycosylation site (N-linked (GlcNAc...) asparagine). Residues 328–348 (VTSLYFTLSTITSIGFGNVSA) constitute an intramembrane region (pore-forming). The Extracellular portion of the chain corresponds to 349–354 (TTDSEK). Residues 355 to 375 (IFTIIMMILGSLMYASVFGNV) form a helical membrane-spanning segment. Topologically, residues 376–829 (SAIIQRLYSG…TPTQETDTIL (454 aa)) are cytoplasmic. Residue 458-559 (AFAGSTPGCL…ILRDDLLDVL (102 aa)) participates in a nucleoside 3',5'-cyclic phosphate binding. Residues 601–674 (SMNKDRYTTP…PLLRRSTNHH (74 aa)) form a disordered region. Residues 603–615 (NKDRYTTPPDGDH) show a composition bias toward basic and acidic residues. Positions 640–650 (SAGSRSSSRCS) are enriched in low complexity.

This sequence belongs to the potassium channel family. H (Eag) (TC 1.A.1.20) subfamily. Kv11.1/KCNH2 sub-subfamily. The potassium channel is composed of a homo- or heterotetrameric complex. Interacts with dnj-1; dnj-1 chaperone promotes tetramerization.

Its subcellular location is the cell membrane. Functionally, pore-forming (alpha) subunit of voltage-gated inwardly rectifying potassium channel. Channel properties are modulated by cAMP and subunit assembly. Regulates the movements of the male's copulatory spicules before and during male mating behavior. This chain is Potassium voltage-gated channel unc-103, found in Caenorhabditis elegans.